Reading from the N-terminus, the 449-residue chain is UDP-N-acetylmuramate--L-alanine ligase (449 aa).

An ATP-binding site is contributed by 121 to 127; the sequence is GAHGKSS.

It belongs to the MurCDEF family.

It localises to the cytoplasm. It catalyses the reaction UDP-N-acetyl-alpha-D-muramate + L-alanine + ATP = UDP-N-acetyl-alpha-D-muramoyl-L-alanine + ADP + phosphate + H(+). The protein operates within cell wall biogenesis; peptidoglycan biosynthesis. Its function is as follows. Cell wall formation. The sequence is that of UDP-N-acetylmuramate--L-alanine ligase from Helicobacter pylori (strain ATCC 700392 / 26695) (Campylobacter pylori).